We begin with the raw amino-acid sequence, 345 residues long: Tetraacyldisaccharide 4'-kinase (345 aa).

Residue 54 to 61 (TLGGAGKT) coordinates ATP.

Belongs to the LpxK family.

It catalyses the reaction a lipid A disaccharide + ATP = a lipid IVA + ADP + H(+). The protein operates within glycolipid biosynthesis; lipid IV(A) biosynthesis; lipid IV(A) from (3R)-3-hydroxytetradecanoyl-[acyl-carrier-protein] and UDP-N-acetyl-alpha-D-glucosamine: step 6/6. In terms of biological role, transfers the gamma-phosphate of ATP to the 4'-position of a tetraacyldisaccharide 1-phosphate intermediate (termed DS-1-P) to form tetraacyldisaccharide 1,4'-bis-phosphate (lipid IVA). The protein is Tetraacyldisaccharide 4'-kinase of Allorhizobium ampelinum (strain ATCC BAA-846 / DSM 112012 / S4) (Agrobacterium vitis (strain S4)).